The sequence spans 232 residues: Orotidine 5'-phosphate decarboxylase (232 aa).

Substrate contacts are provided by residues Asp-16, Lys-38, Asp-65–Thr-74, Thr-119, Arg-180, Gln-189, Gly-209, and Arg-210. Catalysis depends on Lys-67, which acts as the Proton donor.

It belongs to the OMP decarboxylase family. Type 1 subfamily. Homodimer.

It catalyses the reaction orotidine 5'-phosphate + H(+) = UMP + CO2. It participates in pyrimidine metabolism; UMP biosynthesis via de novo pathway; UMP from orotate: step 2/2. Its function is as follows. Catalyzes the decarboxylation of orotidine 5'-monophosphate (OMP) to uridine 5'-monophosphate (UMP). The chain is Orotidine 5'-phosphate decarboxylase from Methylorubrum populi (strain ATCC BAA-705 / NCIMB 13946 / BJ001) (Methylobacterium populi).